Here is a 166-residue protein sequence, read N- to C-terminus: Cytochrome c-type biogenesis protein CcmE (166 aa).

Topologically, residues 1 to 7 (MTRKQKR) are cytoplasmic. The helical; Signal-anchor for type II membrane protein transmembrane segment at 8–28 (LALIASGAVVVSLAVGLVMFA) threads the bilayer. Over 29–166 (LRDNIVFFYS…QTAPQGAQAY (138 aa)) the chain is Periplasmic. Heme is bound by residues His-122 and Tyr-126. Residues 139–166 (GVWQEEGKSEGKPSAIPAQTAPQGAQAY) form a disordered region.

Belongs to the CcmE/CycJ family.

Its subcellular location is the cell inner membrane. In terms of biological role, heme chaperone required for the biogenesis of c-type cytochromes. Transiently binds heme delivered by CcmC and transfers the heme to apo-cytochromes in a process facilitated by CcmF and CcmH. This chain is Cytochrome c-type biogenesis protein CcmE, found in Methylocella silvestris (strain DSM 15510 / CIP 108128 / LMG 27833 / NCIMB 13906 / BL2).